The chain runs to 191 residues: Protein YceI (191 aa).

The N-terminal stretch at 1-22 (MKKNLLGFTLASLLFTTGSAVA) is a signal peptide.

Belongs to the UPF0312 family. Type 1 subfamily.

It localises to the periplasm. The sequence is that of Protein YceI from Salmonella newport (strain SL254).